The sequence spans 139 residues: Nucleoside diphosphate kinase (139 aa).

Residues Lys10, Phe58, Arg86, Thr92, Arg104, and Asn114 each contribute to the ATP site. The active-site Pros-phosphohistidine intermediate is His117.

It belongs to the NDK family. In terms of assembly, homotetramer. Requires Mg(2+) as cofactor.

The protein resides in the cytoplasm. The enzyme catalyses a 2'-deoxyribonucleoside 5'-diphosphate + ATP = a 2'-deoxyribonucleoside 5'-triphosphate + ADP. It carries out the reaction a ribonucleoside 5'-diphosphate + ATP = a ribonucleoside 5'-triphosphate + ADP. In terms of biological role, major role in the synthesis of nucleoside triphosphates other than ATP. The ATP gamma phosphate is transferred to the NDP beta phosphate via a ping-pong mechanism, using a phosphorylated active-site intermediate. This is Nucleoside diphosphate kinase from Mycolicibacterium smegmatis (strain ATCC 700084 / mc(2)155) (Mycobacterium smegmatis).